A 339-amino-acid chain; its full sequence is MNKKIILAIESSCDETAAAVVVNGREVLSNIISSQIDIHTKFGGVVPEVASRKHIEAINAVVEEALEVAGVTFDDIDAIAVTYGPGLVGALLVGLQYAKGLAYSLDKPLIGVNHIEGHISANFIDHKDLEPPFVCLVVSGGHTFVVHVEDYGKFEIIGETRDDAAGEAFDKVARAVGLGYPGGPKIDKLAKEGNSDAIKFPKANFHDDNLDFSFSGVKSAVLNYLNKMEMKNEEINKADVVASFQKAVVEVLTDNAIKTCKMRKADKIAIAGGVASNSALRENLLREGEKRGIKVLFPSPILCTDNAAMIGSAAYFELLKGNISKMSLNAKPNLRLGER.

Residues histidine 114 and histidine 118 each contribute to the Fe cation site. Residues valine 137–glycine 141, aspartate 170, glycine 183, aspartate 187, and asparagine 277 contribute to the substrate site. A Fe cation-binding site is contributed by aspartate 305.

This sequence belongs to the KAE1 / TsaD family. The cofactor is Fe(2+).

The protein resides in the cytoplasm. The enzyme catalyses L-threonylcarbamoyladenylate + adenosine(37) in tRNA = N(6)-L-threonylcarbamoyladenosine(37) in tRNA + AMP + H(+). In terms of biological role, required for the formation of a threonylcarbamoyl group on adenosine at position 37 (t(6)A37) in tRNAs that read codons beginning with adenine. Is involved in the transfer of the threonylcarbamoyl moiety of threonylcarbamoyl-AMP (TC-AMP) to the N6 group of A37, together with TsaE and TsaB. TsaD likely plays a direct catalytic role in this reaction. The polypeptide is tRNA N6-adenosine threonylcarbamoyltransferase (Clostridium perfringens (strain SM101 / Type A)).